Here is a 357-residue protein sequence, read N- to C-terminus: Peptide chain release factor 1 (357 aa).

Glutamine 236 carries the post-translational modification N5-methylglutamine. Basic and acidic residues predominate over residues 284–293 (RRKKDQERAN). The interval 284–313 (RRKKDQERANNRRKQIGSGDRSERIRTYNF) is disordered.

This sequence belongs to the prokaryotic/mitochondrial release factor family. Post-translationally, methylated by PrmC. Methylation increases the termination efficiency of RF1.

The protein resides in the cytoplasm. Its function is as follows. Peptide chain release factor 1 directs the termination of translation in response to the peptide chain termination codons UAG and UAA. This chain is Peptide chain release factor 1, found in Rickettsia bellii (strain RML369-C).